A 287-amino-acid polypeptide reads, in one-letter code: Lipoyl synthase (287 aa).

[4Fe-4S] cluster contacts are provided by C34, C39, C45, C60, C64, C67, and S273. One can recognise a Radical SAM core domain in the interval 46-262 (WNKRHATVMI…KYIAYSKGFL (217 aa)).

It belongs to the radical SAM superfamily. Lipoyl synthase family. It depends on [4Fe-4S] cluster as a cofactor.

The protein localises to the cytoplasm. It catalyses the reaction [[Fe-S] cluster scaffold protein carrying a second [4Fe-4S](2+) cluster] + N(6)-octanoyl-L-lysyl-[protein] + 2 oxidized [2Fe-2S]-[ferredoxin] + 2 S-adenosyl-L-methionine + 4 H(+) = [[Fe-S] cluster scaffold protein] + N(6)-[(R)-dihydrolipoyl]-L-lysyl-[protein] + 4 Fe(3+) + 2 hydrogen sulfide + 2 5'-deoxyadenosine + 2 L-methionine + 2 reduced [2Fe-2S]-[ferredoxin]. It functions in the pathway protein modification; protein lipoylation via endogenous pathway; protein N(6)-(lipoyl)lysine from octanoyl-[acyl-carrier-protein]: step 2/2. Functionally, catalyzes the radical-mediated insertion of two sulfur atoms into the C-6 and C-8 positions of the octanoyl moiety bound to the lipoyl domains of lipoate-dependent enzymes, thereby converting the octanoylated domains into lipoylated derivatives. The chain is Lipoyl synthase from Wolbachia sp. subsp. Brugia malayi (strain TRS).